Reading from the N-terminus, the 355-residue chain is S-adenosylmethionine:tRNA ribosyltransferase-isomerase (355 aa).

It belongs to the QueA family. As to quaternary structure, monomer.

The protein resides in the cytoplasm. It catalyses the reaction 7-aminomethyl-7-carbaguanosine(34) in tRNA + S-adenosyl-L-methionine = epoxyqueuosine(34) in tRNA + adenine + L-methionine + 2 H(+). It participates in tRNA modification; tRNA-queuosine biosynthesis. Functionally, transfers and isomerizes the ribose moiety from AdoMet to the 7-aminomethyl group of 7-deazaguanine (preQ1-tRNA) to give epoxyqueuosine (oQ-tRNA). The sequence is that of S-adenosylmethionine:tRNA ribosyltransferase-isomerase from Gluconacetobacter diazotrophicus (strain ATCC 49037 / DSM 5601 / CCUG 37298 / CIP 103539 / LMG 7603 / PAl5).